A 509-amino-acid polypeptide reads, in one-letter code: Zinc finger CCCH-type with G patch domain-containing protein (509 aa).

A C3H1-type zinc finger spans residues 155-178 (PCNYYLEGECRFDEIRCRYSHGAL). The tract at residues 254–277 (EDELTSEDSSSSPHDESSDEIDSD) is disordered. Positions 310–356 (TRGIGSKLMEKMGYIHGTGLGSEGRGIVTPVSAQILPQGRSLDACME) constitute a G-patch domain. Positions 407–430 (LGGGESRHQGDQAAKKAKTNDLQQ) are disordered. A compositionally biased stretch (basic and acidic residues) spans 411 to 420 (ESRHQGDQAA).

Its subcellular location is the nucleus. Functionally, transcription repressor. The chain is Zinc finger CCCH-type with G patch domain-containing protein from Drosophila pseudoobscura pseudoobscura (Fruit fly).